Consider the following 168-residue polypeptide: Probable chemoreceptor glutamine deamidase CheD 2 (168 aa).

It belongs to the CheD family.

The catalysed reaction is L-glutaminyl-[protein] + H2O = L-glutamyl-[protein] + NH4(+). Its function is as follows. Probably deamidates glutamine residues to glutamate on methyl-accepting chemotaxis receptors (MCPs), playing an important role in chemotaxis. The protein is Probable chemoreceptor glutamine deamidase CheD 2 of Leptospira interrogans serogroup Icterohaemorrhagiae serovar copenhageni (strain Fiocruz L1-130).